The sequence spans 492 residues: Phosphoenolpyruvate carboxylase (492 aa).

Belongs to the PEPCase type 2 family. Homotetramer. The cofactor is Mg(2+).

The catalysed reaction is oxaloacetate + phosphate = phosphoenolpyruvate + hydrogencarbonate. In terms of biological role, catalyzes the irreversible beta-carboxylation of phosphoenolpyruvate (PEP) to form oxaloacetate (OAA), a four-carbon dicarboxylic acid source for the tricarboxylic acid cycle. The polypeptide is Phosphoenolpyruvate carboxylase (Halobacterium salinarum (strain ATCC 29341 / DSM 671 / R1)).